A 240-amino-acid chain; its full sequence is Probable 2-phosphosulfolactate phosphatase (240 aa).

The protein belongs to the ComB family. Mg(2+) is required as a cofactor.

It carries out the reaction (2R)-O-phospho-3-sulfolactate + H2O = (2R)-3-sulfolactate + phosphate. The protein is Probable 2-phosphosulfolactate phosphatase of Clostridium kluyveri (strain NBRC 12016).